Consider the following 108-residue polypeptide: Protein S100-A15A (108 aa).

The EF-hand domain occupies 53 to 88 (KEPYYVTELFQATDKNRDNQICFDEFLYILGKLVKD). Ca(2+) contacts are provided by Asp66, Asn68, Asp70, Gln72, and Glu77.

It belongs to the S-100 family.

The sequence is that of Protein S100-A15A (S100A15A) from Gorilla gorilla gorilla (Western lowland gorilla).